The primary structure comprises 851 residues: ATP-dependent DNA helicase DDX31 (851 aa).

Positions 1–196 are disordered; that stretch reads MAPDLASQRH…STSDRNQEER (196 aa). A Q motif motif is present at residues 230-259; it reads AAFHELGLHPHLISTINTVLKMSSMTSVQK. The region spanning 262–443 is the Helicase ATP-binding domain; sequence IPVLLEGRDA…DISLHDPVSI (182 aa). 275–282 lines the ATP pocket; that stretch reads SQTGSGKT. The short motif at 388-391 is the DEAD box element; it reads DEAD. A Helicase C-terminal domain is found at 480–659; that stretch reads SLKQHVTVVP…VSEIKMEDIL (180 aa). Disordered regions lie at residues 762 to 784 and 804 to 851; these read KKRK…HSLA and KQNA…SQKV. Position 828 is an omega-N-methylarginine (Arg-828). The segment covering 841–851 has biased composition (basic and acidic residues); it reads VQRDSKTSQKV.

It belongs to the DEAD box helicase family. DDX31/DBP7 subfamily. Interacts with NPM1; this interaction prevents interaction between NPM1 and HDM2. In terms of tissue distribution, weakly or undetectably expressed in normal organs. Up-regulated in renal cell carcinoma.

It localises to the nucleus. The protein resides in the nucleolus. The catalysed reaction is ATP + H2O = ADP + phosphate + H(+). Its function is as follows. May have DNA helicase activity and RNA helicase activity. Probably have ssDNA and RNA dependent ATPase activity. Plays a role in ribosome biogenesis and TP53/p53 regulation through its interaction with NPM1. The polypeptide is ATP-dependent DNA helicase DDX31 (Homo sapiens (Human)).